The sequence spans 176 residues: Calcium and integrin-binding family member 2 (176 aa).

EF-hand domains are found at residues 55-90, 92-127, and 133-168; these read RENPFKERIVEAFSEDGEGNLTFNDFVDMFSVLCES, PRDLKASYAFKIYDFNTDNFICKEDLQLTLARLTKS, and EVVLVCDKVIEEADLDGDGKLGFADFEDMIAKAPDF. Asp-105, Asn-107, Asp-109, Asp-116, Asp-146, Asp-148, Asp-150, Lys-152, and Asp-157 together coordinate Ca(2+).

In terms of assembly, monomer. Homodimer. Interacts with WHRN and MYO7A. Interacts with ITGA2B (via C-terminus cytoplasmic tail region); the interactions are stabilized/increased in a calcium and magnesium-dependent manner. Interacts with ITGA7 (via C-terminus cytoplasmic tail region); the interactions are stabilized/increased in a calcium and magnesium-dependent manner. Interacts with TMC1. Interacts with TMC2. Expressed in liver, heart, kidney, brain, spleen, stomach, ovary, testis and muscle.

The protein resides in the cytoplasm. It is found in the cell projection. Its subcellular location is the stereocilium. The protein localises to the photoreceptor inner segment. It localises to the cilium. The protein resides in the photoreceptor outer segment. It is found in the cell membrane. Its subcellular location is the sarcolemma. In terms of biological role, calcium- and integrin-binding protein that plays a role in intracellular calcium homeostasis. Acts as an auxiliary subunit of the sensory mechanoelectrical transduction (MET) channel in hair cells. Essential for mechanoelectrical transduction (MET) currents in auditory hair cells and thereby required for hearing. Regulates the function of hair cell mechanotransduction by controlling the distribution of transmembrane channel-like proteins TMC1 and TMC2, and by regulating the function of the MET channels in hair cells. Required for the maintenance of auditory hair cell stereocilia bundle morphology and function and for hair-cell survival in the cochlea. Critical for proper photoreceptor cell maintenance and function. Plays a role in intracellular calcium homeostasis by decreasing ATP-induced calcium release. The chain is Calcium and integrin-binding family member 2 (CIB2) from Ovis aries (Sheep).